A 647-amino-acid chain; its full sequence is Solute carrier family 23 member 2 (647 aa).

The span at 1–11 shows a compositional bias: polar residues; sequence MMGVGKNTSKS. The disordered stretch occupies residues 1-26; the sequence is MMGVGKNTSKSVEVGGSTEGKYEEEA. At 8–109 the chain is on the cytoplasmic side; the sequence is TSKSVEVGGS…LCIFLGLQHY (102 aa). Serine 69 is modified (phosphoserine). At threonine 74 the chain carries Phosphothreonine. The residue at position 77 (serine 77) is a Phosphoserine. Threonine 78 carries the post-translational modification Phosphothreonine. Serine 80 is modified (phosphoserine). Residues 110–130 traverse the membrane as a helical segment; that stretch reads LTCFSGTIAVPFLLADAMCVG. At 131–138 the chain is on the extracellular side; that stretch reads DDQWATSQ. Residues 139–159 traverse the membrane as a helical segment; the sequence is LIGTIFFCVGITTLLQTTFGC. Arginine 160 is a topological domain (cytoplasmic). Residues 161 to 181 form a helical membrane-spanning segment; that stretch reads LPLFQASAFAFLAPARAILSL. Topologically, residues 182 to 215 are extracellular; it reads DKWKCNTTEITVANGTAELLEHIWHPRIQEIQGA. Residues asparagine 187 and asparagine 195 are each glycosylated (N-linked (GlcNAc...) asparagine). A helical transmembrane segment spans residues 216 to 236; it reads IIMSSLIEVVIGLLGLPGALL. The Cytoplasmic segment spans residues 237-263; it reads RYIGPLTITPTVALIGLSGFQAAGERA. Residues 264 to 281 form a helical membrane-spanning segment; the sequence is GKHWGIAMLTIFLVLLFS. Residues 282-285 are Extracellular-facing; it reads QYAR. Residues 286-299 constitute an intramembrane region (helical); the sequence is NVKFPLPIYKSKKG. Residues 300–306 lie on the Extracellular side of the membrane; the sequence is WTAYKLQ. A helical transmembrane segment spans residues 307–327; sequence LFKMFPIILAILVSWLLCFIF. Over 328–368 the chain is Cytoplasmic; sequence TVTDVFPSNSTDYGYYARTDARKGVLLVAPWFKVPYPFQWG. The helical transmembrane segment at 369 to 389 threads the bilayer; sequence MPTVSAAGVIGMLSAVVASII. Residues 390–414 lie on the Extracellular side of the membrane; sequence ESIGDYYACARLSCAPPPPIHAINR. A helical membrane pass occupies residues 415 to 435; it reads GIFVEGLSCVLDGVFGTGNGS. Residues 436-458 are Cytoplasmic-facing; it reads TSSSPNIGVLGITKVGSRRVIQY. A helical transmembrane segment spans residues 459-479; sequence GAALMLGLGMIGKFSALFASL. Topologically, residues 480–482 are extracellular; that stretch reads PDP. The chain crosses the membrane as a helical span at residues 483 to 503; sequence VLGALFCTLFGMITAVGLSNL. At 504–513 the chain is on the cytoplasmic side; the sequence is QFIDLNSSRN. The chain crosses the membrane as a helical span at residues 514–534; sequence LFVLGFSIFFGLVLPSYLRQN. Residues 535-544 are Extracellular-facing; sequence PLVTGITGID. Residues 545–565 traverse the membrane as a helical segment; the sequence is QVLNVLLTTAMFVGGCVAFIL. Residues 566 to 647 are Cytoplasmic-facing; sequence DNTIPGTPEE…SSDKDSQATV (82 aa). Residue threonine 646 is modified to Phosphothreonine.

It belongs to the nucleobase:cation symporter-2 (NCS2) (TC 2.A.40) family. In terms of assembly, interacts with CLSTN3. Post-translationally, phosphorylated. Highly expressed in neural, neuroendocrine, exocrine and endothelial tissues and in osteoblasts. Detected in neurons throughout the central nervous system, in meninges and choroid plexus, in the anterior pituitary, the intermediate lobe, in pancreas, adrenal cortex, gastric glands, and in the inner nuclear layer of the retina.

The protein resides in the cell membrane. It catalyses the reaction L-ascorbate(out) + 2 Na(+)(out) = L-ascorbate(in) + 2 Na(+)(in). In terms of biological role, sodium/ascorbate cotransporter. Mediates electrogenic uptake of vitamin C, with a stoichiometry of 2 Na(+) for each ascorbate. In Rattus norvegicus (Rat), this protein is Solute carrier family 23 member 2 (Slc23a2).